Here is a 207-residue protein sequence, read N- to C-terminus: Small ribosomal subunit protein uS4c (207 aa).

An S4 RNA-binding domain is found at 92 to 156 (MRLDNILFRL…YQSIITKRIE (65 aa)).

The protein belongs to the universal ribosomal protein uS4 family. Part of the 30S ribosomal subunit. Contacts protein S5. The interaction surface between S4 and S5 is involved in control of translational fidelity.

The protein localises to the plastid. Its subcellular location is the chloroplast. Its function is as follows. One of the primary rRNA binding proteins, it binds directly to 16S rRNA where it nucleates assembly of the body of the 30S subunit. With S5 and S12 plays an important role in translational accuracy. In Equisetum palustre (Marsh horsetail), this protein is Small ribosomal subunit protein uS4c (rps4).